Consider the following 310-residue polypeptide: p-hydroxybenzoic acid efflux pump subunit AaeA (310 aa).

A helical transmembrane segment spans residues 12–32; that stretch reads AITLVLVILAFIAIFRAWVYY.

The protein belongs to the membrane fusion protein (MFP) (TC 8.A.1) family.

The protein resides in the cell inner membrane. Its function is as follows. Forms an efflux pump with AaeB. This Escherichia fergusonii (strain ATCC 35469 / DSM 13698 / CCUG 18766 / IAM 14443 / JCM 21226 / LMG 7866 / NBRC 102419 / NCTC 12128 / CDC 0568-73) protein is p-hydroxybenzoic acid efflux pump subunit AaeA.